The primary structure comprises 357 residues: MNEFGDSMIRTLIVDDSAFMRMAIRSMLASSPDIKIAGDACNGKEAVDKSKSLHPDIIIMDVNMPVMDGLTAVKTIMSTDPVPIIMFSTLTVEGSKEALEALQLGAIDFVPKSESHHDVNKIEKELVDKIRNIHSSNPSILRLINMRKFKGEVVRGKWSCAGDFAVLIGSSTGGPSSLEQVIPRLPGDLPAPVFVVQHMPEGNFCKQLAERLNFLSELEIKEARNNEKVTAGVVYIAPGGYHMTVKKALGVTRIKLIKSQPVHAVMPAVDVIAESMLDVYGKNIVAAILTGMGFDGAAGFKKIRDAGGSTIACSEDTCVIFGMPKAAIAAGGIDTVKPIFEIPEEIVRMSEVKCNGK.

In terms of domain architecture, Response regulatory spans 10 to 127 (RTLIVDDSAF…DVNKIEKELV (118 aa)). Position 61 is a 4-aspartylphosphate (Asp-61). One can recognise a CheB-type methylesterase domain in the interval 159–353 (SCAGDFAVLI…EEIVRMSEVK (195 aa)). Residues Ser-171, His-198, and Asp-295 contribute to the active site.

The protein belongs to the CheB family. Post-translationally, phosphorylated by CheA. Phosphorylation of the N-terminal regulatory domain activates the methylesterase activity.

It localises to the cytoplasm. It carries out the reaction [protein]-L-glutamate 5-O-methyl ester + H2O = L-glutamyl-[protein] + methanol + H(+). It catalyses the reaction L-glutaminyl-[protein] + H2O = L-glutamyl-[protein] + NH4(+). Its function is as follows. Involved in chemotaxis. Part of a chemotaxis signal transduction system that modulates chemotaxis in response to various stimuli. Catalyzes the demethylation of specific methylglutamate residues introduced into the chemoreceptors (methyl-accepting chemotaxis proteins or MCP) by CheR. Also mediates the irreversible deamidation of specific glutamine residues to glutamic acid. The polypeptide is Protein-glutamate methylesterase/protein-glutamine glutaminase 1 (Methanosarcina mazei (strain ATCC BAA-159 / DSM 3647 / Goe1 / Go1 / JCM 11833 / OCM 88) (Methanosarcina frisia)).